The sequence spans 193 residues: MDIELILLIVVLFLTPYLIALFIIFNPPYCILDYLLYKKYRKAKEEWHYITSTNMGMNRSRWIFILIVEIIALCSGFYILININRPHDEILTFSLIFLFIAIIYDKLTPASGTVEIYKEGIAVYIKIFNTLKPFLNRYIVLPWKFFKGYKIKSKNNTKYVILVPKSRLFFSIYLIDRDGNVEKTIRNHLNPIQ.

3 consecutive transmembrane segments (helical) span residues 5–25, 63–83, and 90–110; these read LILLIVVLFLTPYLIALFIIF, IFILIVEIIALCSGFYILINI, and ILTFSLIFLFIAIIYDKLTPA.

The protein resides in the cell membrane. This is an uncharacterized protein from Methanocaldococcus jannaschii (strain ATCC 43067 / DSM 2661 / JAL-1 / JCM 10045 / NBRC 100440) (Methanococcus jannaschii).